Reading from the N-terminus, the 655-residue chain is p-hydroxybenzoic acid efflux pump subunit AaeB (655 aa).

Transmembrane regions (helical) follow at residues 13-33 (FAVK…HFQL), 38-58 (WAVL…GGEP), 69-89 (LRII…IAMI), 93-113 (LLMI…SSLV), 121-141 (WGLA…EPLL), 152-172 (EIVI…PRSI), 370-390 (LFWL…IAVV), 407-427 (FIYG…VIIP), 431-451 (QSML…GIEV), 459-479 (MGAL…TFHF), and 482-502 (FLDS…VILL).

The protein belongs to the aromatic acid exporter ArAE (TC 2.A.85) family.

The protein localises to the cell inner membrane. In terms of biological role, forms an efflux pump with AaeA. Could function as a metabolic relief valve, allowing to eliminate certain compounds when they accumulate to high levels in the cell. The protein is p-hydroxybenzoic acid efflux pump subunit AaeB of Shigella boydii serotype 18 (strain CDC 3083-94 / BS512).